Consider the following 206-residue polypeptide: Thymidylate kinase (206 aa).

10 to 17 (GVDGVGKT) serves as a coordination point for ATP.

It belongs to the thymidylate kinase family.

It catalyses the reaction dTMP + ATP = dTDP + ADP. Functionally, phosphorylation of dTMP to form dTDP in both de novo and salvage pathways of dTTP synthesis. The polypeptide is Thymidylate kinase (Bifidobacterium longum (strain DJO10A)).